The chain runs to 209 residues: Germin-like protein (209 aa).

The first 18 residues, 1-18, serve as a signal peptide directing secretion; sequence MIVPIFFLFSLLFSSSHG. A disulfide bridge connects residues C24 and C39. A Cupin type-1 domain is found at 53–199; sequence SGLGITGNTT…ASFLDPAEIK (147 aa). N60 is a glycosylation site (N-linked (GlcNAc...) asparagine). Residues H101, H103, E108, and H147 each contribute to the Mn(2+) site.

The protein resides in the secreted. Its subcellular location is the extracellular space. It localises to the apoplast. Its function is as follows. Has antibacterial activity against B.subtilis (MIC=5 ug), B.cereus (MIC=50 ug), A.hydrophila (MIC=2.5 ug), S.marcescens(MIC=10 ug), S.enterica (MIC=10 ug), P.entomophila (MIC=2.5 ug) and P.rhodesiae (MIC=10 ug). Has antifungal activity against F.solani KACC 40384 and F.oxysporum KACC 40032. Probably has no oxalate oxidase activity even if the active site is conserved. The chain is Germin-like protein from Morus alba (White mulberry).